The sequence spans 144 residues: Endoribonuclease YbeY (144 aa).

The Zn(2+) site is built by histidine 108, histidine 112, and histidine 118.

It belongs to the endoribonuclease YbeY family. Requires Zn(2+) as cofactor.

The protein resides in the cytoplasm. Functionally, single strand-specific metallo-endoribonuclease involved in late-stage 70S ribosome quality control and in maturation of the 3' terminus of the 16S rRNA. In Phytoplasma australiense, this protein is Endoribonuclease YbeY.